A 189-amino-acid chain; its full sequence is Elongation factor P (189 aa).

This sequence belongs to the elongation factor P family.

It is found in the cytoplasm. Its pathway is protein biosynthesis; polypeptide chain elongation. Its function is as follows. Involved in peptide bond synthesis. Stimulates efficient translation and peptide-bond synthesis on native or reconstituted 70S ribosomes in vitro. Probably functions indirectly by altering the affinity of the ribosome for aminoacyl-tRNA, thus increasing their reactivity as acceptors for peptidyl transferase. The protein is Elongation factor P of Ehrlichia ruminantium (strain Gardel).